The following is a 519-amino-acid chain: Transketolase, chloroplastic (519 aa).

Position 11 (Asp-11) interacts with Mg(2+). The thiamine diphosphate site is built by Gly-12 and Asn-41. Mg(2+) contacts are provided by Asn-41 and Ile-43. Thiamine diphosphate is bound at residue His-118. Substrate is bound by residues His-118, Arg-212, and Ser-239. Residues Glu-266 and Phe-293 each contribute to the thiamine diphosphate site. Glu-266 functions as the Proton donor in the catalytic mechanism. 3 residues coordinate substrate: His-317, Asp-325, and Arg-376.

This sequence belongs to the transketolase family. Homodimer. The cofactor is Mg(2+). Ca(2+) is required as a cofactor. It depends on Mn(2+) as a cofactor. Co(2+) serves as cofactor. Requires thiamine diphosphate as cofactor. As to expression, constitutively expressed in leaves and roots.

Its subcellular location is the plastid. It localises to the chloroplast. The enzyme catalyses D-sedoheptulose 7-phosphate + D-glyceraldehyde 3-phosphate = aldehydo-D-ribose 5-phosphate + D-xylulose 5-phosphate. Functionally, catalyzes the transfer of a two-carbon ketol group from a ketose donor to an aldose acceptor, via a covalent intermediate with the cofactor thiamine pyrophosphate. This is Transketolase, chloroplastic (TKT3) from Craterostigma plantagineum (Blue gem).